A 110-amino-acid polypeptide reads, in one-letter code: UPF0060 membrane protein RPA3838 (110 aa).

A run of 4 helical transmembrane segments spans residues 4–24 (LLTF…FWAW), 31–51 (PLWL…LTLA), 59–79 (AYAA…WAIE), and 85–105 (QWDV…LFGP).

It belongs to the UPF0060 family.

It localises to the cell inner membrane. In Rhodopseudomonas palustris (strain ATCC BAA-98 / CGA009), this protein is UPF0060 membrane protein RPA3838.